A 398-amino-acid polypeptide reads, in one-letter code: Acetate kinase (398 aa).

Asn-7 is a Mg(2+) binding site. Lys-14 is a binding site for ATP. Arg-91 is a substrate binding site. Asp-148 serves as the catalytic Proton donor/acceptor. ATP contacts are provided by residues 208 to 212 (HLGNG), 282 to 284 (DFR), and 330 to 334 (GVGEN). Glu-383 provides a ligand contact to Mg(2+).

The protein belongs to the acetokinase family. As to quaternary structure, homodimer. Requires Mg(2+) as cofactor. The cofactor is Mn(2+).

It is found in the cytoplasm. It carries out the reaction acetate + ATP = acetyl phosphate + ADP. Its pathway is metabolic intermediate biosynthesis; acetyl-CoA biosynthesis; acetyl-CoA from acetate: step 1/2. Functionally, catalyzes the formation of acetyl phosphate from acetate and ATP. Can also catalyze the reverse reaction. The polypeptide is Acetate kinase (Carboxydothermus hydrogenoformans (strain ATCC BAA-161 / DSM 6008 / Z-2901)).